Reading from the N-terminus, the 695-residue chain is Interleukin-1 receptor accessory protein-like 1 (695 aa).

Residues 1-24 (MKAPIPHLILLYATFTQSLKVVTK) form the signal peptide. One can recognise an Ig-like C2-type 1 domain in the interval 25-134 (RGSADGCTDW…YCMKVSISLT (110 aa)). Topologically, residues 25–357 (RGSADGCTDW…LLHKRELMYT (333 aa)) are extracellular. 2 disulfides stabilise this stretch: Cys-31-Cys-126 and Cys-53-Cys-118. N-linked (GlcNAc...) asparagine glycans are attached at residues Asn-63, Asn-122, and Asn-138. Cystine bridges form between Cys-143/Cys-185 and Cys-164/Cys-216. 2 consecutive Ig-like C2-type domains span residues 143 to 232 (CYNS…TELT) and 242 to 350 (PKLL…VLLH). N-linked (GlcNAc...) asparagine glycans are attached at residues Asn-213, Asn-264, and Asn-331. Cys-267 and Cys-334 form a disulfide bridge. A helical membrane pass occupies residues 358 to 378 (VELAGGLGAILLLLICSVTIY). Residues 379–695 (KCYKIEIMLF…RETSISSVIW (317 aa)) lie on the Cytoplasmic side of the membrane. The TIR domain maps to 403 to 558 (KDYDAYLSYT…KFWKRLQYEM (156 aa)). Glu-490 is an active-site residue. Residues 548–643 (SKFWKRLQYE…TGTLPLTSIG (96 aa)) form an interaction with NCS1 region. The interval 657-679 (NGQRPQTKSNREPNPDEAHTNSA) is disordered. Over residues 665–675 (SNREPNPDEAH) the composition is skewed to basic and acidic residues.

It belongs to the interleukin-1 receptor family. In terms of assembly, homodimer. Interacts (calcium-independent) with NCS1/FREQ. Interacts (via the first immunoglobilin domain) with PTPRD (via the second immunoglobilin domain); this interaction is PTPRD-splicing-dependent and induces pre- and post-synaptic differentiation of neurons and is required for IL1RAPL1-mediated synapse formation. Detected in total brain extracts, olfactory bulb, hippocampus and striatum (at protein level).

It is found in the cell membrane. The protein localises to the cytoplasm. Its subcellular location is the cell projection. The protein resides in the axon. It localises to the dendrite. It catalyses the reaction NAD(+) + H2O = ADP-D-ribose + nicotinamide + H(+). Functionally, may regulate secretion and presynaptic differentiation through inhibition of the activity of N-type voltage-gated calcium channel. May activate the MAP kinase JNK. Plays a role in neurite outgrowth. During dendritic spine formation can bidirectionally induce pre- and post-synaptic differentiation of neurons by trans-synaptically binding to PTPRD. This Mus musculus (Mouse) protein is Interleukin-1 receptor accessory protein-like 1 (Il1rapl1).